A 1354-amino-acid chain; its full sequence is High molecular weight rhoptry protein 2 (1354 aa).

The signal sequence occupies residues 1–20 (MVKLSGIILLSLVWLKLNNS). 2 cysteine pairs are disulfide-bonded: Cys50–Cys75 and Cys220–Cys227. A helical membrane pass occupies residues 716-736 (LIFAAYMLTLVFFIESQIDIS). Disulfide bonds link Cys768-Cys828, Cys848-Cys889, and Cys924-Cys1011.

As to quaternary structure, component of the RhopH complex. RhopH complex is composed of CLAG3.1/CLAG3.2, RhopH2 and RhopH3 with a 1:1:1 subunit stoichiometry. Interacts with CLAG3.1/CLAG3.2.

It is found in the host cell membrane. Its subcellular location is the parasitophorous vacuole membrane. The protein resides in the host cytoplasm. The protein localises to the cytoplasm. It localises to the cytoplasmic vesicle. It is found in the secretory vesicle. Its subcellular location is the rhoptry. Participates in the formation of new permeability pathways in Plasmodium-infected erythrocytes enabling the uptake of nutrients from the blood plasma. Required for maintaining invasion capacity of merozoites. Required for parasite growth and proliferation. This is High molecular weight rhoptry protein 2 from Plasmodium berghei (strain Anka).